The following is a 509-amino-acid chain: Cytochrome P450 4A10 (509 aa).

2 helical membrane-spanning segments follow: residues 15 to 35 and 121 to 141; these read LSGF…VKAV and LLAP…WFQH. Position 320 (Glu-320) interacts with heme. Residue Ser-439 is modified to Phosphoserine. Residue Cys-456 coordinates heme.

Belongs to the cytochrome P450 family. It depends on heme as a cofactor. As to expression, highly expressed in the kidneys of both genders.

Its subcellular location is the endoplasmic reticulum membrane. The protein localises to the microsome membrane. It carries out the reaction an omega-methyl-long-chain fatty acid + reduced [NADPH--hemoprotein reductase] + O2 = an omega-hydroxy-long-chain fatty acid + oxidized [NADPH--hemoprotein reductase] + H2O + H(+). The enzyme catalyses dodecanoate + reduced [NADPH--hemoprotein reductase] + O2 = 12-hydroxydodecanoate + oxidized [NADPH--hemoprotein reductase] + H2O + H(+). It catalyses the reaction dodecanoate + reduced [NADPH--hemoprotein reductase] + O2 = 11-hydroxydodecanoate + oxidized [NADPH--hemoprotein reductase] + H2O + H(+). The catalysed reaction is tetradecanoate + reduced [NADPH--hemoprotein reductase] + O2 = 14-hydroxytetradecanoate + oxidized [NADPH--hemoprotein reductase] + H2O + H(+). It carries out the reaction hexadecanoate + reduced [NADPH--hemoprotein reductase] + O2 = 16-hydroxyhexadecanoate + oxidized [NADPH--hemoprotein reductase] + H2O + H(+). The enzyme catalyses (9Z)-octadecenoate + reduced [NADPH--hemoprotein reductase] + O2 = 18-hydroxy-(9Z)-octadecenoate + oxidized [NADPH--hemoprotein reductase] + H2O + H(+). It catalyses the reaction (9Z,12Z)-octadecadienoate + reduced [NADPH--hemoprotein reductase] + O2 = 18-hydroxy-(9Z,12Z)-octadecadienoate + oxidized [NADPH--hemoprotein reductase] + H2O + H(+). The catalysed reaction is (9Z,12Z)-octadecadienoate + reduced [NADPH--hemoprotein reductase] + O2 = 17-hydroxy-(9Z,12Z)-octadecadienoate + oxidized [NADPH--hemoprotein reductase] + H2O + H(+). It carries out the reaction (5Z,8Z,11Z,14Z)-eicosatetraenoate + reduced [NADPH--hemoprotein reductase] + O2 = 20-hydroxy-(5Z,8Z,11Z,14Z)-eicosatetraenoate + oxidized [NADPH--hemoprotein reductase] + H2O + H(+). The enzyme catalyses 8,9-epoxy-(5Z,11Z,14Z)-eicosatrienoate + reduced [NADPH--hemoprotein reductase] + O2 = 20-hydroxy-8,9-epoxy-(5Z,11Z,14Z)-eicosatrienoate + oxidized [NADPH--hemoprotein reductase] + H2O + H(+). Its function is as follows. A cytochrome P450 monooxygenase involved in the metabolism of fatty acids. Catalyzes predominantly the oxidation of the terminal carbon (omega-oxidation) of long-chain fatty acids. Acts as a major omega-hydroxylase for dodecanoic (lauric) acid in liver. In kidney, may play an important role in omega-hydroxylation of (5Z,8Z,11Z,14Z)-eicosatetraenoic acid (arachidonate) to 20-hydroxyeicosatetraenoic acid (20-HETE), a signaling molecule acting both as vasoconstrictive and natriuretic with overall effect on arterial blood pressure. Also participates in the formation of anti-inflammatory hydroxyepoxyeicosatrienoic acids (HEETs) in kidney by converting 8,9-epoxyeicosatrienoic acid (EET) to 20,8,9-HEET, an activator of PPARA. Displays substantially lower fatty acid omega-1 hydroxylase activity. Mechanistically, uses molecular oxygen inserting one oxygen atom into a substrate, and reducing the second into a water molecule, with two electrons provided by NADPH via cytochrome P450 reductase (CPR; NADPH-ferrihemoprotein reductase). This chain is Cytochrome P450 4A10, found in Mus musculus (Mouse).